Reading from the N-terminus, the 332-residue chain is MQHLFEKLFRAESMSQEESQQLFAAIVRGELDPSQLAAVLISMKVRGETPAEIAGAAQALLADAQHFPRPDYLFADIVGTGGDGTNSINISTASAFVAASCGVKVAKHGNRSVSSRSGSSDLLAAFGIRLDMSAEQSRLALDDLGVCFLFAPQYHTGFRHAMPVRQQLKTRTLFNVLGPLINPARPPLALIGVYSPELVLPIAQTLKVLGYQRAAVVHGGGMDEVAIHAPTQVAELNNGSIESYQLTPEDFGLNRYPLAALQGGMPEENRDILARLLQGKGETAHAAAVAANVALLLKLYGQENLRHNAQQALEMIHSGQAFDRVTALAARG.

Residues glycine 79, 82-83, serine 87, 89-92, 107-115, and serine 119 each bind 5-phospho-alpha-D-ribose 1-diphosphate; these read GD, NIST, and KHGNRSVSS. An anthranilate-binding site is contributed by glycine 79. Serine 91 is a Mg(2+) binding site. Asparagine 110 lines the anthranilate pocket. Arginine 165 lines the anthranilate pocket. Positions 223 and 224 each coordinate Mg(2+).

It belongs to the anthranilate phosphoribosyltransferase family. In terms of assembly, homodimer. Mg(2+) serves as cofactor.

It carries out the reaction N-(5-phospho-beta-D-ribosyl)anthranilate + diphosphate = 5-phospho-alpha-D-ribose 1-diphosphate + anthranilate. It participates in amino-acid biosynthesis; L-tryptophan biosynthesis; L-tryptophan from chorismate: step 2/5. Catalyzes the transfer of the phosphoribosyl group of 5-phosphorylribose-1-pyrophosphate (PRPP) to anthranilate to yield N-(5'-phosphoribosyl)-anthranilate (PRA). In Yersinia pseudotuberculosis serotype O:3 (strain YPIII), this protein is Anthranilate phosphoribosyltransferase.